The sequence spans 110 residues: uncharacterized protein (110 aa).

2 helical membrane-spanning segments follow: residues 21–41 (IQLALANFFAISCLWLKPQIC) and 63–83 (PSMIHFLPLISLTFAFSIIVV).

It is found in the membrane. This is an uncharacterized protein from Saccharomyces cerevisiae (strain ATCC 204508 / S288c) (Baker's yeast).